Reading from the N-terminus, the 229-residue chain is uncharacterized protein (229 aa).

Helical transmembrane passes span 21–41 (IYSLVGMGVGLSAFVSYLMLY), 56–76 (MIYYGAAIIELILVFVASGAA), 83–103 (ALPIFLIYAALNGFTLSFIIV), 109–129 (TVFQAFLSSAAVFFAMSIIGV), 141–161 (AMFAALIGVVVASLINLFIGS), 162–182 (GMMSYVISVISVLIFSGLIAS), and 202–222 (WAVAMALSLYLDFINLFISLL).

It belongs to the BI1 family.

It localises to the cell membrane. This is an uncharacterized protein from Streptococcus pyogenes serotype M3 (strain ATCC BAA-595 / MGAS315).